A 428-amino-acid polypeptide reads, in one-letter code: Glutamate-1-semialdehyde 2,1-aminomutase (428 aa).

Lys267 carries the N6-(pyridoxal phosphate)lysine modification.

This sequence belongs to the class-III pyridoxal-phosphate-dependent aminotransferase family. HemL subfamily. In terms of assembly, homodimer. Pyridoxal 5'-phosphate is required as a cofactor.

The protein localises to the cytoplasm. It carries out the reaction (S)-4-amino-5-oxopentanoate = 5-aminolevulinate. The protein operates within porphyrin-containing compound metabolism; protoporphyrin-IX biosynthesis; 5-aminolevulinate from L-glutamyl-tRNA(Glu): step 2/2. The chain is Glutamate-1-semialdehyde 2,1-aminomutase from Persephonella marina (strain DSM 14350 / EX-H1).